Reading from the N-terminus, the 424-residue chain is Glutamate-1-semialdehyde 2,1-aminomutase (424 aa).

Lys263 carries the post-translational modification N6-(pyridoxal phosphate)lysine.

It belongs to the class-III pyridoxal-phosphate-dependent aminotransferase family. HemL subfamily. In terms of assembly, homodimer. Requires pyridoxal 5'-phosphate as cofactor.

It is found in the cytoplasm. It carries out the reaction (S)-4-amino-5-oxopentanoate = 5-aminolevulinate. It functions in the pathway porphyrin-containing compound metabolism; protoporphyrin-IX biosynthesis; 5-aminolevulinate from L-glutamyl-tRNA(Glu): step 2/2. The polypeptide is Glutamate-1-semialdehyde 2,1-aminomutase (Campylobacter jejuni subsp. doylei (strain ATCC BAA-1458 / RM4099 / 269.97)).